The primary structure comprises 327 residues: Ornithine carbamoyltransferase (327 aa).

Carbamoyl phosphate is bound by residues Ser-56–Thr-59, Gln-83, Arg-107, and His-134–Gln-137. L-ornithine is bound by residues Asn-166, Asp-230, and Ser-234–Met-235. Carbamoyl phosphate contacts are provided by residues Cys-269–Leu-270 and Arg-314.

The protein belongs to the aspartate/ornithine carbamoyltransferase superfamily. OTCase family.

It is found in the cytoplasm. The catalysed reaction is carbamoyl phosphate + L-ornithine = L-citrulline + phosphate + H(+). The protein operates within amino-acid degradation; L-arginine degradation via ADI pathway; carbamoyl phosphate from L-arginine: step 2/2. Reversibly catalyzes the transfer of the carbamoyl group from carbamoyl phosphate (CP) to the N(epsilon) atom of ornithine (ORN) to produce L-citrulline. The sequence is that of Ornithine carbamoyltransferase from Borreliella burgdorferi (strain ZS7) (Borrelia burgdorferi).